We begin with the raw amino-acid sequence, 363 residues long: tRNA dimethylallyltransferase (363 aa).

65–72 (GPTASGKS) is a binding site for ATP. 67–72 (TASGKS) is a binding site for substrate. Interaction with substrate tRNA regions lie at residues 90 to 93 (DSMQ) and 214 to 218 (QRLIR).

It belongs to the IPP transferase family. As to quaternary structure, monomer. Mg(2+) serves as cofactor.

It catalyses the reaction adenosine(37) in tRNA + dimethylallyl diphosphate = N(6)-dimethylallyladenosine(37) in tRNA + diphosphate. Its function is as follows. Catalyzes the transfer of a dimethylallyl group onto the adenine at position 37 in tRNAs that read codons beginning with uridine, leading to the formation of N6-(dimethylallyl)adenosine (i(6)A). The chain is tRNA dimethylallyltransferase from Rickettsia rickettsii (strain Sheila Smith).